The primary structure comprises 423 residues: Protein CLP1 homolog (423 aa).

ATP is bound by residues glutamate 16, lysine 57, and 119 to 124 (DVGKST).

Belongs to the Clp1 family. Clp1 subfamily.

It localises to the nucleus. Functionally, required for endonucleolytic cleavage during polyadenylation-dependent pre-mRNA 3'-end formation. This chain is Protein CLP1 homolog (cbc), found in Drosophila yakuba (Fruit fly).